We begin with the raw amino-acid sequence, 60 residues long: Photosystem II reaction center protein L (60 aa).

The helical transmembrane segment at S39–F59 threads the bilayer.

Belongs to the PsbL family. In terms of assembly, PSII is composed of 1 copy each of membrane proteins PsbA, PsbB, PsbC, PsbD, PsbE, PsbF, PsbH, PsbI, PsbJ, PsbK, PsbL, PsbM, PsbT, PsbX, PsbY, PsbZ, Psb30/Ycf12, at least 3 peripheral proteins of the oxygen-evolving complex and a large number of cofactors. It forms dimeric complexes.

The protein localises to the plastid. It localises to the chloroplast thylakoid membrane. Its function is as follows. One of the components of the core complex of photosystem II (PSII). PSII is a light-driven water:plastoquinone oxidoreductase that uses light energy to abstract electrons from H(2)O, generating O(2) and a proton gradient subsequently used for ATP formation. It consists of a core antenna complex that captures photons, and an electron transfer chain that converts photonic excitation into a charge separation. This subunit is found at the monomer-monomer interface and is required for correct PSII assembly and/or dimerization. This chain is Photosystem II reaction center protein L, found in Oedogonium cardiacum (Filamentous green alga).